A 327-amino-acid polypeptide reads, in one-letter code: Methionyl-tRNA formyltransferase (327 aa).

121–124 (SLLP) provides a ligand contact to (6S)-5,6,7,8-tetrahydrofolate.

The protein belongs to the Fmt family.

The enzyme catalyses L-methionyl-tRNA(fMet) + (6R)-10-formyltetrahydrofolate = N-formyl-L-methionyl-tRNA(fMet) + (6S)-5,6,7,8-tetrahydrofolate + H(+). In terms of biological role, attaches a formyl group to the free amino group of methionyl-tRNA(fMet). The formyl group appears to play a dual role in the initiator identity of N-formylmethionyl-tRNA by promoting its recognition by IF2 and preventing the misappropriation of this tRNA by the elongation apparatus. The sequence is that of Methionyl-tRNA formyltransferase from Burkholderia ambifaria (strain MC40-6).